We begin with the raw amino-acid sequence, 79 residues long: Morintide mO1 (79 aa).

The first 20 residues, 1–20 (MAKLSFLSLFLLCLVATATA), serve as a signal peptide directing secretion. In terms of domain architecture, Chitin-binding type-1 spans 21–63 (QNCGRQAGNRACANQLCCSQYGFCGSTSEYCSRANGCQSNCRG). 4 disulfides stabilise this stretch: Cys-23-Cys-38, Cys-32-Cys-44, Cys-37-Cys-51, and Cys-57-Cys-61. Positions 64–79 (GGGADGAGGEAGGGGP) are excised as a propeptide.

In terms of tissue distribution, leaves (at protein level).

Functionally, chitin-binding protein which functions in defense against chitin-containing fungal pathogens. Inhibits the growth of budding hyphae in A.alternata and A.brassiciola. This is Morintide mO1 from Moringa oleifera (Horseradish tree).